We begin with the raw amino-acid sequence, 788 residues long: Protein TRS1 (788 aa).

2 disordered regions span residues 1-82 and 610-663; these read MAQR…NFWH and IHKK…PSRV. Residues 16-25 show a composition bias toward gly residues; it reads RGRGAGGPSG. Over residues 26 to 56 the composition is skewed to low complexity; that stretch reads VGSSPPSSCVPMGATSTAGTGASAAPTATPG. Positions 74–248 are RNA-binding; it reads SGNNSNFWHG…HGAGEVVRLY (175 aa). The segment covering 651 to 660 has biased composition (basic and acidic residues); that stretch reads LRRDDEDWKP. An interaction with host EIF2AK2/PKR region spans residues 672–788; sequence LDETFWVLGS…NVATHYHYNA (117 aa).

Belongs to the herpesviridae US22 family. Interacts with host EIF2AK2/PKR; this interaction retains EIF2AK2 to the host nucleus and prevents its activation. Interaction (via N-terminus) with host BECN1; this interaction inhibits host autophagy. Interacts with the viral DNA polymerase accessory subunit UL44. Interacts with host HSPA5.

The protein localises to the virion. Its subcellular location is the host cytoplasm. It is found in the host nucleus. Functionally, inhibits the establishment of the antiviral state in the infected cell. Prevents the phosphorylation of the host eukaryotic translation initiation factor eIF-2alpha/EIF2S1 and thus the shutoff of viral and cellular protein synthesis by directly interacting with EIF2AK2/PKR. Prevents stress granule formation in response to eIF-2alpha/EIF2S1 phosphorylation, thereby rescuing viral replication and protein synthesis. Also inhibits host autophagy by interacting with host Beclin-1/BECN1. The sequence is that of Protein TRS1 (TRS1) from Human cytomegalovirus (strain Merlin) (HHV-5).